Reading from the N-terminus, the 769-residue chain is Gephyrin (769 aa).

Residues 14-153 (QIRVGVLTVS…LPGSKKGSQE (140 aa)) form an MPT Mo-transferase region. The interval 140–349 (LIINLPGSKK…VDITKVARRH (210 aa)) is interaction with GABARAP. Disordered stretches follow at residues 181-232 (DELE…DSSS) and 260-299 (TASL…SKGV). Residues 187–199 (PSPPPPLSPPPTT) show a composition bias toward pro residues. Ser188 and Ser194 each carry phosphoserine. Thr198 is modified (phosphothreonine). A Phosphoserine modification is found at Ser200. Cys212 carries S-palmitoyl cysteine lipidation. Residues 261-286 (ASLSTTPSESPRAQATSRLSTASCPT) are compositionally biased toward polar residues. Phosphoserine is present on Ser262. Phosphothreonine is present on residues Thr265 and Thr266. Ser268 and Ser270 each carry phosphoserine. Cys284 is lipidated: S-palmitoyl cysteine. Residues 327–769 (SSKENILRAS…VVDVMVIGRL (443 aa)) form an MPT adenylyltransferase region. Residue Ser338 is modified to Phosphoserine.

In the N-terminal section; belongs to the MoaB/Mog family. The protein in the C-terminal section; belongs to the MoeA family. As to quaternary structure, homotrimer, homodimer and homooligomer. Interacts with SRGAP2 (via SH3 domain). Interacts with GLRB. Interacts with GABARAP. Interacts with GABRA3. GABRA3 and GLRB occupy overlapping binding sites. Interacts with ARHGAP32; IQSEC3, INSYN1 and INSYN2A. Mg(2+) serves as cofactor. Palmitoylated. Palmitoylation is stimulated by GABA type A receptors activity. Palmitoylation by ZDHHC12 regulates clustering at synapses.

Its subcellular location is the postsynaptic cell membrane. It localises to the cell membrane. The protein resides in the cytoplasm. The protein localises to the cytosol. It is found in the cytoskeleton. Its subcellular location is the cell projection. It localises to the dendrite. The protein resides in the postsynaptic density. The enzyme catalyses molybdopterin + ATP + H(+) = adenylyl-molybdopterin + diphosphate. The catalysed reaction is adenylyl-molybdopterin + molybdate = Mo-molybdopterin + AMP + H(+). Its pathway is cofactor biosynthesis; molybdopterin biosynthesis. Inhibited by copper and tungsten. Functionally, microtubule-associated protein involved in membrane protein-cytoskeleton interactions. It is thought to anchor the inhibitory glycine receptor (GLYR) to subsynaptic microtubules. Acts as a major instructive molecule at inhibitory synapses, where it also clusters GABA type A receptors. Also has a catalytic activity and catalyzes two steps in the biosynthesis of the molybdenum cofactor. In the first step, molybdopterin is adenylated. Subsequently, molybdate is inserted into adenylated molybdopterin and AMP is released. The chain is Gephyrin (Gphn) from Mus musculus (Mouse).